Consider the following 191-residue polypeptide: Cytochrome c oxidase assembly protein CtaG (191 aa).

Over 1 to 9 the chain is Cytoplasmic; that stretch reads MSLSPHQKT. A helical; Signal-anchor for type II membrane protein transmembrane segment spans residues 10-30; that stretch reads AGGLVLVVAVMGAASFAAVPF. Topologically, residues 31–191 are periplasmic; the sequence is YNWFCRVTGF…LAAESATDVN (161 aa).

Belongs to the COX11/CtaG family.

The protein resides in the cell inner membrane. In terms of biological role, exerts its effect at some terminal stage of cytochrome c oxidase synthesis, probably by being involved in the insertion of the copper B into subunit I. The polypeptide is Cytochrome c oxidase assembly protein CtaG (Cereibacter sphaeroides (strain ATCC 17023 / DSM 158 / JCM 6121 / CCUG 31486 / LMG 2827 / NBRC 12203 / NCIMB 8253 / ATH 2.4.1.) (Rhodobacter sphaeroides)).